Consider the following 71-residue polypeptide: Small ribosomal subunit protein bS21 (71 aa).

Residues 48–60 (KKAAAVKRYKKKL) show a composition bias toward basic residues. The segment at 48–71 (KKAAAVKRYKKKLQRESIRTTRMY) is disordered. The segment covering 61-71 (QRESIRTTRMY) has biased composition (basic and acidic residues).

The protein belongs to the bacterial ribosomal protein bS21 family.

This Psychrobacter sp. (strain PRwf-1) protein is Small ribosomal subunit protein bS21.